The sequence spans 861 residues: Probable linoleate 9S-lipoxygenase 8 (861 aa).

One can recognise a PLAT domain in the interval 33-160 (FTDLASSLTG…NYKSDRIFFA (128 aa)). In terms of domain architecture, Lipoxygenase spans 163-861 (PYLPSETPEL…GKGIPNSVSI (699 aa)). Residues 220-245 (TLGGSAEYPYPRRGRTGRPPTRTDPK) are disordered. Positions 522, 527, 713, 717, and 861 each coordinate Fe cation.

This sequence belongs to the lipoxygenase family. As to quaternary structure, monomer. The cofactor is Fe cation.

It localises to the cytoplasm. It catalyses the reaction (9Z,12Z)-octadecadienoate + O2 = (9S)-hydroperoxy-(10E,12Z)-octadecadienoate. It functions in the pathway lipid metabolism; oxylipin biosynthesis. Plant lipoxygenases may be involved in a number of diverse aspects of plant physiology including growth and development, pest resistance, and senescence or responses to wounding. Catalyzes the hydroperoxidation of lipids containing a cis,cis-1,4-pentadiene structure. This Solanum tuberosum (Potato) protein is Probable linoleate 9S-lipoxygenase 8 (LOX1.8).